The chain runs to 343 residues: F-box/kelch-repeat protein At3g08810 (343 aa).

A compositionally biased stretch (basic residues) spans 1–15; that stretch reads MSYPERKRKRSRWSK. The interval 1 to 25 is disordered; it reads MSYPERKRKRSRWSKPHSTQNPSPS. An F-box domain is found at 20–66; it reads QNPSPSLPDDVLLSIFARVSRLYYPTLSHVSESFRSLLASPELYKAR. Kelch repeat units lie at residues 134-181, 183-224, and 225-271; these read DIYN…VRDG, QGGH…LPDS, and YCVI…VILA.

The protein is F-box/kelch-repeat protein At3g08810 of Arabidopsis thaliana (Mouse-ear cress).